The chain runs to 319 residues: D-ribose/D-allose-binding protein (319 aa).

The N-terminal stretch at 1–29 is a signal peptide; the sequence is MKRVASRRLLAAVVLTACSSFLPLSAVHA.

The protein belongs to the bacterial solute-binding protein 2 family.

The protein resides in the periplasm. Binds specifically both D-ribose and D-allose, with affinities in the lower micromolar range. This chain is D-ribose/D-allose-binding protein, found in Pseudomonas aeruginosa (strain ATCC 15692 / DSM 22644 / CIP 104116 / JCM 14847 / LMG 12228 / 1C / PRS 101 / PAO1).